The following is a 139-amino-acid chain: HTH-type transcriptional repressor Mb2911 (139 aa).

One can recognise an HTH marR-type domain in the interval 6-138 (DAPLGYLLYR…FKRMLEKLGS (133 aa)).

In terms of assembly, homodimer.

Represses expression of the HQNO methyltransferase htm gene by binding to its promoter region. The protein is HTH-type transcriptional repressor Mb2911 of Mycobacterium bovis (strain ATCC BAA-935 / AF2122/97).